A 131-amino-acid polypeptide reads, in one-letter code: Profilin-1 (131 aa).

Residues cysteine 13 and cysteine 115 are joined by a disulfide bond. The short motif at 81–97 (RVIRGKKGAGGITIKKT) is the Involved in PIP2 interaction element. Threonine 111 carries the phosphothreonine modification.

Belongs to the profilin family. Occurs in many kinds of cells as a complex with monomeric actin in a 1:1 ratio.

Its subcellular location is the cytoplasm. It localises to the cytoskeleton. Functionally, binds to actin and affects the structure of the cytoskeleton. At high concentrations, profilin prevents the polymerization of actin, whereas it enhances it at low concentrations. By binding to PIP2, it inhibits the formation of IP3 and DG. This chain is Profilin-1 (PRO1), found in Phleum pratense (Common timothy).